Reading from the N-terminus, the 227-residue chain is Holliday junction branch migration complex subunit RuvA (227 aa).

A domain I region spans residues 1 to 64; that stretch reads MFESISGILT…EDALRLFGFS (64 aa). The tract at residues 65-143 is domain II; the sequence is NVQERTLFLS…LTDAASCAQS (79 aa). Positions 144-158 are flexible linker; the sequence is QTDDRAAHPSNLGCA. The domain III stretch occupies residues 159–227; sequence PHAREIEDLV…HPHAVAPAAE (69 aa).

Belongs to the RuvA family. Homotetramer. Forms an RuvA(8)-RuvB(12)-Holliday junction (HJ) complex. HJ DNA is sandwiched between 2 RuvA tetramers; dsDNA enters through RuvA and exits via RuvB. An RuvB hexamer assembles on each DNA strand where it exits the tetramer. Each RuvB hexamer is contacted by two RuvA subunits (via domain III) on 2 adjacent RuvB subunits; this complex drives branch migration. In the full resolvosome a probable DNA-RuvA(4)-RuvB(12)-RuvC(2) complex forms which resolves the HJ.

It localises to the cytoplasm. Functionally, the RuvA-RuvB-RuvC complex processes Holliday junction (HJ) DNA during genetic recombination and DNA repair, while the RuvA-RuvB complex plays an important role in the rescue of blocked DNA replication forks via replication fork reversal (RFR). RuvA specifically binds to HJ cruciform DNA, conferring on it an open structure. The RuvB hexamer acts as an ATP-dependent pump, pulling dsDNA into and through the RuvAB complex. HJ branch migration allows RuvC to scan DNA until it finds its consensus sequence, where it cleaves and resolves the cruciform DNA. This Treponema pallidum (strain Nichols) protein is Holliday junction branch migration complex subunit RuvA.